Here is a 215-residue protein sequence, read N- to C-terminus: UPF0056 membrane protein BU267 (215 aa).

The next 6 helical transmembrane spans lie at 14-34 (FFIG…FTTM), 56-76 (LILL…GISI), 81-101 (IAGG…QFIK), 120-140 (VVPL…TIVW), 150-170 (LFLC…CFEA), and 189-209 (IMGL…IGAI).

The protein belongs to the UPF0056 (MarC) family.

It localises to the cell membrane. This is UPF0056 membrane protein BU267 from Buchnera aphidicola subsp. Acyrthosiphon pisum (strain APS) (Acyrthosiphon pisum symbiotic bacterium).